Reading from the N-terminus, the 209-residue chain is Redox-sensing transcriptional repressor Rex (209 aa).

The H-T-H motif DNA-binding region spans 16–55 (LYYRFIQNLSLSGKQRVSSAELSEAVKVDSATIRRDFSYF). 90–95 (GVGNLG) is a binding site for NAD(+).

It belongs to the transcriptional regulatory Rex family. As to quaternary structure, homodimer.

The protein localises to the cytoplasm. Modulates transcription in response to changes in cellular NADH/NAD(+) redox state. This chain is Redox-sensing transcriptional repressor Rex, found in Bacillus mycoides (strain KBAB4) (Bacillus weihenstephanensis).